The following is a 405-amino-acid chain: Glucan 1,3-beta-glucosidase A (405 aa).

An N-terminal signal peptide occupies residues 1-14 (MLPLLLCIVPYCWS). Catalysis depends on Glu-199, which acts as the Proton donor. 2 disulfide bridges follow: Cys-280–Cys-405 and Cys-306–Cys-332. Glu-298 acts as the Nucleophile in catalysis.

The protein belongs to the glycosyl hydrolase 5 (cellulase A) family. In terms of assembly, monomer. The cofactor is Mn(2+).

Its subcellular location is the secreted. The enzyme catalyses Successive hydrolysis of beta-D-glucose units from the non-reducing ends of (1-&gt;3)-beta-D-glucans, releasing alpha-glucose.. In terms of biological role, beta-glucanases participate in the metabolism of beta-glucan, the main structural component of the cell wall. It could also function biosynthetically as a transglycosylase. This chain is Glucan 1,3-beta-glucosidase A (exgA), found in Aspergillus oryzae (strain ATCC 42149 / RIB 40) (Yellow koji mold).